The following is a 510-amino-acid chain: Serine/threonine-protein kinase RIO3 (510 aa).

Disordered regions lie at residues 100-126 and 143-191; these read GSSS…ENED and DEEN…DMVG. 2 stretches are compositionally biased toward basic and acidic residues: residues 108–118 and 162–179; these read TPDRYHPKTMQ and TKHD…KTFN. In terms of domain architecture, Protein kinase spans 235 to 510; sequence LLLLKWINQG…RGISPAREYN (276 aa). Residues 241–249 and lysine 275 contribute to the ATP site; that span reads INQGVFDSV. The Proton acceptor role is filled by aspartate 388. A compositionally biased stretch (basic and acidic residues) spans 474–499; it reads RSVDLRHDKSRPADMELKKYNEEKKA. Residues 474–510 form a disordered region; the sequence is RSVDLRHDKSRPADMELKKYNEEKKANRGISPAREYN.

Belongs to the protein kinase superfamily. RIO-type Ser/Thr kinase family. The cofactor is Mg(2+). As to expression, expressed in tail neurons (PVQ and PHAL/PQR).

It catalyses the reaction L-seryl-[protein] + ATP = O-phospho-L-seryl-[protein] + ADP + H(+). The enzyme catalyses L-threonyl-[protein] + ATP = O-phospho-L-threonyl-[protein] + ADP + H(+). This Caenorhabditis elegans protein is Serine/threonine-protein kinase RIO3 (riok-3).